The sequence spans 358 residues: C-X-C chemokine receptor type 4-B (358 aa).

Residues 1 to 25 are important for chemokine binding and signaling; it reads MDGFSGGIDINIFDGNSTENGSGDF. Over 1–44 the chain is Extracellular; sequence MDGFSGGIDINIFDGNSTENGSGDFEDFIEPCFMQENSDFNRIF. N-linked (GlcNAc...) asparagine glycosylation is found at asparagine 16 and asparagine 20. 2 disulfides stabilise this stretch: cysteine 32–cysteine 281 and cysteine 113–cysteine 190. A helical membrane pass occupies residues 45-67; sequence LPTIYSFIFLLGIIGNGLVVVVM. The Cytoplasmic portion of the chain corresponds to 68-81; it reads GYQKKSRTMTDKYR. The chain crosses the membrane as a helical span at residues 82-103; that stretch reads LHLSVADLLFVFTLPFWSVDAA. The chemokine binding stretch occupies residues 98–101; it reads WSVD. Over 104–114 the chain is Extracellular; it reads IGWYFKEFLCK. The helical transmembrane segment at 115–134 threads the bilayer; the sequence is AVHVIYTVNLYSSVLILAFI. The interval 117–121 is chemokine binding; sequence HVIYT. The Cytoplasmic portion of the chain corresponds to 135 to 158; it reads SLDRYLAIVHATNSQGSRKMLADK. An involved in dimerization; when bound to chemokine region spans residues 139-151; it reads YLAIVHATNSQGS. The helical transmembrane segment at 159–178 threads the bilayer; it reads VVYAGVWLPALLLTVPDLVF. The Extracellular segment spans residues 179–202; sequence ASVSNENGQFVCDRIYPIDNRETW. Positions 190 to 194 are chemokine binding, important for signaling; sequence CDRIY. The chain crosses the membrane as a helical span at residues 203-223; the sequence is TVGFRFLHITVGLILPGLIIL. The Cytoplasmic segment spans residues 224 to 248; that stretch reads VCYCVIISKLSHSKGHQKRKALKTT. A helical transmembrane segment spans residues 249-268; the sequence is VILILAFFACWLPYYVCLTT. Residues 269 to 289 lie on the Extracellular side of the membrane; sequence DTFMMLGLVKADCIWENTLHK. Residues 290–309 form a helical membrane-spanning segment; the sequence is AISITEALAFFHCCLNPILY. Topologically, residues 310–358 are cytoplasmic; it reads AFLGAKFKKSAQNAFTSVSRGSSLKILSKKRAGLSSVSTESESSSFHSS. A disordered region spans residues 338 to 358; it reads KKRAGLSSVSTESESSSFHSS. Low complexity predominate over residues 344 to 358; that stretch reads SSVSTESESSSFHSS.

This sequence belongs to the G-protein coupled receptor 1 family. As to quaternary structure, monomer. Can form dimers. In terms of processing, sulfation is required for efficient binding of cxcl12/sdf-1alpha and promotes its dimerization. O- and N-glycosylated.

It is found in the cell membrane. The protein resides in the cytoplasm. The protein localises to the nucleus. Its subcellular location is the early endosome. It localises to the late endosome. It is found in the lysosome. In terms of biological role, receptor for the C-X-C chemokine cxcl12/sdf-1. Transduces a signal by increasing the intracellular level of calcium ions. Signaling with cxcl12/sdf-1 mediates the directional movement of mesodermal cells during gastrulation. May play a role in the migration of embryonic presumptive primordial germ cells (pPGCs). May also be involved in regulating migration of hematopoietic stem cells into the larval liver. The protein is C-X-C chemokine receptor type 4-B (cxcr4-b) of Xenopus laevis (African clawed frog).